Reading from the N-terminus, the 257-residue chain is MKALPALPLMLMLLSMPPPCAPQASGIRGDALEKSCLQQPLDCDDIYAQGYQEDGVYLIYPYGPSVPVPVFCDMTTEGGKWTVFQKRFNGSVSFFRGWSDYKLGFGRADGEYWLGLQNLHLLTLKQKYELRVDLEDFENNTAYAKYIDFSISPNAISAEEDGYTLYVAGFEDGGAGDSLSYHSGQKFSTFDRDQDLFVQNCAALSSGAFWFRSCHFANLNGFYLGGSHLSYANGINWAQWKGFYYSLKRTEMKIRRA.

The N-terminal stretch at methionine 1–proline 22 is a signal peptide. The short motif at arginine 28 to aspartate 30 is the Cell attachment site element. Residues lysine 34–alanine 257 enclose the Fibrinogen C-terminal domain. Asparagine 89 and asparagine 139 each carry an N-linked (GlcNAc...) asparagine glycan.

As to quaternary structure, homodimer. Can also form higher oligomers. Interacts with FBN1, FBN2 and LOX. Interacts with COL1A1 in a Ca (2+)-dependent manner. Interacts with ELN in a Ca (2+)-dependent manner; this interaction promotes ELN self-assembly.

It localises to the secreted. Its subcellular location is the extracellular space. The protein localises to the extracellular matrix. Its function is as follows. Could be involved in calcium-dependent cell adhesion or intercellular interactions. May contribute to the elastic fiber assembly and/or maintenance. This chain is Microfibril-associated glycoprotein 4 (Mfap4), found in Mus musculus (Mouse).